The following is a 369-amino-acid chain: Geranylgeranyl pyrophosphate synthase, chloroplastic (369 aa).

Residues Lys-118, Arg-121, and His-150 each contribute to the isopentenyl diphosphate site. The Mg(2+) site is built by Asp-157 and Asp-163. Residue Arg-168 participates in dimethylallyl diphosphate binding. Arg-169 serves as a coordination point for isopentenyl diphosphate. Residues Lys-254, Thr-255, Gln-292, Lys-309, and Lys-319 each contribute to the dimethylallyl diphosphate site.

This sequence belongs to the FPP/GGPP synthase family. Monomer. Mg(2+) is required as a cofactor.

Its subcellular location is the plastid. It localises to the chloroplast. It catalyses the reaction isopentenyl diphosphate + dimethylallyl diphosphate = (2E)-geranyl diphosphate + diphosphate. The enzyme catalyses isopentenyl diphosphate + (2E)-geranyl diphosphate = (2E,6E)-farnesyl diphosphate + diphosphate. The catalysed reaction is isopentenyl diphosphate + (2E,6E)-farnesyl diphosphate = (2E,6E,10E)-geranylgeranyl diphosphate + diphosphate. Its pathway is isoprenoid biosynthesis; farnesyl diphosphate biosynthesis; farnesyl diphosphate from geranyl diphosphate and isopentenyl diphosphate: step 1/1. The protein operates within isoprenoid biosynthesis; geranyl diphosphate biosynthesis; geranyl diphosphate from dimethylallyl diphosphate and isopentenyl diphosphate: step 1/1. It functions in the pathway isoprenoid biosynthesis; geranylgeranyl diphosphate biosynthesis; geranylgeranyl diphosphate from farnesyl diphosphate and isopentenyl diphosphate: step 1/1. In terms of biological role, catalyzes the trans-addition of the three molecules of IPP onto DMAPP to form geranylgeranyl pyrophosphate. The polypeptide is Geranylgeranyl pyrophosphate synthase, chloroplastic (Capsicum annuum (Capsicum pepper)).